We begin with the raw amino-acid sequence, 67 residues long: DNA-directed RNA polymerase subunit omega (67 aa).

Belongs to the RNA polymerase subunit omega family. In terms of assembly, the RNAP catalytic core consists of 2 alpha, 1 beta, 1 beta' and 1 omega subunit. When a sigma factor is associated with the core the holoenzyme is formed, which can initiate transcription.

It catalyses the reaction RNA(n) + a ribonucleoside 5'-triphosphate = RNA(n+1) + diphosphate. Its function is as follows. Promotes RNA polymerase assembly. Latches the N- and C-terminal regions of the beta' subunit thereby facilitating its interaction with the beta and alpha subunits. The protein is DNA-directed RNA polymerase subunit omega of Bacillus velezensis (strain DSM 23117 / BGSC 10A6 / LMG 26770 / FZB42) (Bacillus amyloliquefaciens subsp. plantarum).